A 161-amino-acid chain; its full sequence is Probable K(+)/H(+) antiporter subunit E (161 aa).

2 consecutive transmembrane segments (helical) span residues 4-21 (WFPY…WLLL) and 28-50 (GSIV…LQPA).

The protein belongs to the CPA3 antiporters (TC 2.A.63) subunit E family. In terms of assembly, may form a hetero-oligomeric complex that consists of six subunits: PhaAB, PhaC, PhaD, PhaE, PhaF and PhaG.

It localises to the cell membrane. In terms of biological role, part of a K(+) efflux system which is required for the adaptation of R.meliloti to alkaline pH as well as for the infection process during symbiotic nodule development. This chain is Probable K(+)/H(+) antiporter subunit E (phaE), found in Rhizobium meliloti (strain 1021) (Ensifer meliloti).